An 85-amino-acid chain; its full sequence is Small ribosomal subunit protein uS17 (85 aa).

This sequence belongs to the universal ribosomal protein uS17 family. Part of the 30S ribosomal subunit.

One of the primary rRNA binding proteins, it binds specifically to the 5'-end of 16S ribosomal RNA. The polypeptide is Small ribosomal subunit protein uS17 (Acinetobacter baumannii (strain AB307-0294)).